Reading from the N-terminus, the 236-residue chain is MQTRPRFAVQSLFAILATAAALVAGCSSSSETSDAPLPDGAALLQESASKTKTQQSVHLLLTVQGKVDGLPVEKLDGDLTNAPAVAAEGTADLIAFGQKIADAKFVIADGNLYAALTPGDPLSNYGAAANIYDVSAILNPDTGLANVLANFSDATADGRESINGTEAVRVKGNVSADAVNKIAPALKADGPVPGTAWITEDDHTLLQAQLEPTPGNSVTMTLSDWGKQVNVTKPAA.

Positions 1–25 are cleaved as a signal peptide; that stretch reads MQTRPRFAVQSLFAILATAAALVAG. C26 carries the N-palmitoyl cysteine lipid modification. A lipid anchor (S-diacylglycerol cysteine) is attached at C26.

This sequence belongs to the LppX/LprAFG lipoprotein family. Interacts with itself, Ag85A (MSMEG_6398), LppI (MSMEG_3851) and LppK (MSMEG_3904) in vivo.

It localises to the cell inner membrane. The protein localises to the secreted. It is found in the cell wall. Its function is as follows. Helps membrane protein MSMEG_3069/MSMEI_2992 (P55) transport triacylglycerides (TAG) across the inner cell membrane into the periplasm and probably ultimately to the outer membrane. Binds TAG in its hydrophobic cavity and transfers it between lipid bilayers. TAG probably regulates lipid metabolism and growth regulation and plays a structural role in the outer membrane. Also binds mannosides, lipoarabinomannan and lipomannan and various glycolipids in the same cavity. Required for MSMEG_3069/MSMEI_2992 export activity. Export of ethidium bromide by MSMEG_3069/MSMEI_2992 can be complemented by the equivalent operon from M.tuberculosis (lprG-Rv1410c). Involved in mycolylation. This is Lipoarabinomannan carrier protein LprG from Mycolicibacterium smegmatis (strain ATCC 700084 / mc(2)155) (Mycobacterium smegmatis).